The following is a 101-amino-acid chain: Signal recognition particle 19 kDa protein (101 aa).

It belongs to the SRP19 family. Part of the signal recognition particle protein translocation system, which is composed of SRP and FtsY. Archaeal SRP consists of a 7S RNA molecule of 300 nucleotides and two protein subunits: SRP54 and SRP19.

It localises to the cytoplasm. Its function is as follows. Involved in targeting and insertion of nascent membrane proteins into the cytoplasmic membrane. Binds directly to 7S RNA and mediates binding of the 54 kDa subunit of the SRP. This is Signal recognition particle 19 kDa protein from Thermofilum pendens (strain DSM 2475 / Hrk 5).